The primary structure comprises 106 residues: Ig kappa chain C region, A allele (106 aa).

The Ig-like domain occupies 5–102 (PTVSIFPPSM…SSSPVVKSFN (98 aa)). A disulfide bridge links C26 with C86.

The chain is Ig kappa chain C region, A allele from Rattus norvegicus (Rat).